Here is a 618-residue protein sequence, read N- to C-terminus: Glucose starvation modulator protein 1 (618 aa).

The zn(2)-C6 fungal-type DNA-binding region spans 20–48 (CEFCHTKHIQCDVGRPCQNCLKRNIGKFC). The segment at 325–352 (ANANTHPSHNAKLESECDSSSHSDADLE) is disordered. Residues 335–352 (AKLESECDSSSHSDADLE) show a composition bias toward basic and acidic residues. The PAS domain maps to 466–538 (LLDLENMAKL…QIFNELLAFG (73 aa)).

This sequence belongs to the ERT1/acuK family.

The protein resides in the nucleus. Transcription factor which regulates nonfermentable carbon utilization. Binds specifically to 5'-CGGN(8)CGG-3' and 5'-CGGN(9)CGG-3' sequences in the promoter region. In Saccharomyces cerevisiae (strain YJM789) (Baker's yeast), this protein is Glucose starvation modulator protein 1 (GSM1).